The primary structure comprises 325 residues: All-trans-nonaprenyl-diphosphate synthase (geranyl-diphosphate specific) (325 aa).

Isopentenyl diphosphate-binding residues include K48, R51, and H81. 2 residues coordinate Mg(2+): D88 and D92. Position 97 (R97) interacts with an all-trans-polyprenyl diphosphate. R98 provides a ligand contact to isopentenyl diphosphate. Residues K174, T175, Q211, and K228 each contribute to the an all-trans-polyprenyl diphosphate site.

It belongs to the FPP/GGPP synthase family. In terms of assembly, homodimer. It depends on Mg(2+) as a cofactor.

The enzyme catalyses 7 isopentenyl diphosphate + (2E)-geranyl diphosphate = all-trans-nonaprenyl diphosphate + 7 diphosphate. Functionally, catalyzes the sequential condensation of isopentenyl diphosphate (IPP) with the allylic substrate to give solanesyl diphosphate. Could be important to determine the side chain length of ubiquinone. The protein is All-trans-nonaprenyl-diphosphate synthase (geranyl-diphosphate specific) (sdsA) of Rhodobacter capsulatus (Rhodopseudomonas capsulata).